Here is a 466-residue protein sequence, read N- to C-terminus: D-inositol 3-phosphate glycosyltransferase (466 aa).

Over residues 1 to 12 (MRPMRAGAGAAG) the composition is skewed to low complexity. Residues 1-22 (MRPMRAGAGAAGESCKDDGVRP) form a disordered region. 1D-myo-inositol 3-phosphate is bound at residue His-43. Residues 49 to 50 (QP) and Gly-57 contribute to the UDP-N-acetyl-alpha-D-glucosamine site. 1D-myo-inositol 3-phosphate-binding positions include 54–59 (DAGGMN), Lys-112, Tyr-145, Thr-169, and Arg-189. Arg-263, Lys-268, and Gln-321 together coordinate UDP-N-acetyl-alpha-D-glucosamine. Mg(2+)-binding residues include Phe-330, His-331, and Val-333. Residues Glu-343 and Glu-351 each coordinate UDP-N-acetyl-alpha-D-glucosamine. Thr-357 is a binding site for Mg(2+). Residues 446 to 466 (VRDPVAARKPRRWTARRGVGA) are disordered.

It belongs to the glycosyltransferase group 1 family. MshA subfamily. Homodimer.

The enzyme catalyses 1D-myo-inositol 3-phosphate + UDP-N-acetyl-alpha-D-glucosamine = 1D-myo-inositol 2-acetamido-2-deoxy-alpha-D-glucopyranoside 3-phosphate + UDP + H(+). Its function is as follows. Catalyzes the transfer of a N-acetyl-glucosamine moiety to 1D-myo-inositol 3-phosphate to produce 1D-myo-inositol 2-acetamido-2-deoxy-glucopyranoside 3-phosphate in the mycothiol biosynthesis pathway. The chain is D-inositol 3-phosphate glycosyltransferase from Mycobacterium marinum (strain ATCC BAA-535 / M).